Here is a 368-residue protein sequence, read N- to C-terminus: Xaa-Pro dipeptidase (368 aa).

D223, D234, H298, E327, and E341 together coordinate Mn(2+).

It belongs to the peptidase M24B family. Requires Mn(2+) as cofactor.

It is found in the cytoplasm. It carries out the reaction Xaa-L-Pro dipeptide + H2O = an L-alpha-amino acid + L-proline. This is Xaa-Pro dipeptidase (pepQ) from Lactobacillus delbrueckii subsp. lactis.